The primary structure comprises 484 residues: Sperm-associated antigen 8 (484 aa).

Residues Met-1 to Gln-11 are compositionally biased toward basic and acidic residues. 3 disordered regions span residues Met-1 to Ser-32, Asp-123 to Val-221, and Leu-324 to Gln-348. Composition is skewed to low complexity over residues Ser-20–Ser-32 and Ser-125–Ser-160. A compositionally biased stretch (gly residues) spans Gly-161 to Thr-195. Residues Leu-324–Ser-339 show a composition bias toward polar residues. Mn regions lie at residues Ser-332–Ser-345 and Glu-384–Ala-398. Residues Pro-455–Gly-484 form a disordered region. The span at Gln-475–Gly-484 shows a compositional bias: gly residues.

Belongs to the SPAG8 family. As to quaternary structure, microtubule inner protein component of sperm flagellar doublet microtubules. Interacts with FHL5 (via second LIM domain). Interacts with RANBP9. As to expression, expressed in trachea multiciliated cells.

It localises to the cytoplasm. Its subcellular location is the nucleus. It is found in the cytoplasmic vesicle. The protein localises to the secretory vesicle. The protein resides in the acrosome. It localises to the cytoskeleton. Its subcellular location is the microtubule organizing center. It is found in the spindle. The protein localises to the cilium axoneme. The protein resides in the flagellum axoneme. In terms of biological role, microtubule inner protein (MIP) part of the dynein-decorated doublet microtubules (DMTs) in cilia axoneme, which is required for motile cilia beating. Plays a role in spermatogenesis by enhancing the binding of CREM isoform tau to its coactivator FHL5 and increasing the FHL5-regulated transcriptional activation of CREM isoform tau. Involved in the acrosome reaction and in binding of sperm to the zona pellucida. Plays a role in regulation of the cell cycle by controlling progression through the G2/M phase, possibly by delaying the activation of CDK1 which is required for entry into mitosis. May play a role in fertility and microtubule formation through interaction with RANBP9. The polypeptide is Sperm-associated antigen 8 (SPAG8) (Bos taurus (Bovine)).